Here is a 153-residue protein sequence, read N- to C-terminus: Ribonuclease K3 (153 aa).

Positions 1-26 (MGPDLRCFPLLLLLLGLWWSVRPLCA) are cleaved as a signal peptide. Residue Asn-30 is glycosylated (N-linked (GlcNAc...) asparagine). The active-site Proton acceptor is the His-41. 4 cysteine pairs are disulfide-bonded: Cys-49–Cys-107, Cys-63–Cys-117, Cys-81–Cys-132, and Cys-88–Cys-95. A glycan (N-linked (GlcNAc...) asparagine) is linked at Asn-58. Residue 64-68 (KPQNT) coordinates substrate. N-linked (GlcNAc...) asparagine glycosylation is present at Asn-85. Position 89 (Lys-89) interacts with substrate. The Proton donor role is filled by His-148.

The protein belongs to the pancreatic ribonuclease family. In terms of assembly, interacts (via N-terminus) with bacterial lipopolysaccharide (LPS). In terms of tissue distribution, kidney.

The protein localises to the secreted. Its subcellular location is the lysosome. It is found in the cytoplasmic granule. Its function is as follows. Ribonuclease which shows a preference for the pyrimidines uridine and cytosine. Has potent antibacterial activity against a range of Gram-positive and Gram-negative bacteria, including P.aeruginosa, A.baumanii, M.luteus, S.aureus, E.faecalis, E.faecium, S.saprophyticus and E.coli. Causes loss of bacterial membrane integrity, and also promotes agglutination of Gram-negative bacteria. Probably contributes to urinary tract sterility. Bactericidal activity is independent of RNase activity. The protein is Ribonuclease K3 (RNASE6) of Sus scrofa (Pig).